A 424-amino-acid chain; its full sequence is UDP-N-acetylglucosamine 1-carboxyvinyltransferase (424 aa).

Residue 22–23 (KN) coordinates phosphoenolpyruvate. Residue Arg93 coordinates UDP-N-acetyl-alpha-D-glucosamine. The active-site Proton donor is the Cys117. Cys117 carries the post-translational modification 2-(S-cysteinyl)pyruvic acid O-phosphothioketal. Residues 122–126 (RPVDL), 164–166 (SVG), Asp307, and Ile329 contribute to the UDP-N-acetyl-alpha-D-glucosamine site.

It belongs to the EPSP synthase family. MurA subfamily.

It is found in the cytoplasm. The enzyme catalyses phosphoenolpyruvate + UDP-N-acetyl-alpha-D-glucosamine = UDP-N-acetyl-3-O-(1-carboxyvinyl)-alpha-D-glucosamine + phosphate. Its pathway is cell wall biogenesis; peptidoglycan biosynthesis. Its function is as follows. Cell wall formation. Adds enolpyruvyl to UDP-N-acetylglucosamine. The chain is UDP-N-acetylglucosamine 1-carboxyvinyltransferase from Haemophilus influenzae (strain ATCC 51907 / DSM 11121 / KW20 / Rd).